Reading from the N-terminus, the 236-residue chain is 3-oxoacyl-[acyl-carrier-protein] reductase (236 aa).

Methionine 1 is modified (N-acetylmethionine). Residues 11–14 (SRGI) and 34–35 (RN) contribute to the NADP(+) site. The residue at position 40 (lysine 40) is an N6-acetyllysine. Residues aspartate 56 and 83–85 (AAG) each bind NADP(+). Lysine 96 is subject to N6-acetyllysine. Serine 134 serves as a coordination point for substrate. Residues tyrosine 147, lysine 151, and 180–182 (IRT) contribute to the NADP(+) site. Tyrosine 147 (proton acceptor) is an active-site residue. An N6-acetyllysine modification is found at lysine 194.

Belongs to the short-chain dehydrogenases/reductases (SDR) family. As to quaternary structure, homotetramer (in vitro). Heterotetramer with HSD17B8; contains two molecules each of HSD17B8 and CBR4. Does not form homotetramers when HSD17B8 is coexpressed, only heterotetramers (in vitro).

The protein localises to the mitochondrion matrix. The enzyme catalyses a (3R)-hydroxyacyl-[ACP] + NADP(+) = a 3-oxoacyl-[ACP] + NADPH + H(+). The catalysed reaction is a quinone + NADPH + H(+) = a quinol + NADP(+). The protein operates within lipid metabolism; fatty acid biosynthesis. Its function is as follows. Component of the heterotetramer complex KAR (3-ketoacyl-[acyl carrier protein] reductase or 3-ketoacyl-[ACP] reductase) that forms part of the mitochondrial fatty acid synthase (mtFAS). Beta-subunit of the KAR heterotetramer complex, responsible for the 3-ketoacyl-ACP reductase activity of the mtFAS, reduces 3-oxoacyl-[ACP] to (3R)-hydroxyacyl-[ACP] in a NADPH-dependent manner with no chain length preference, thereby participating in mitochondrial fatty acid biosynthesis. The homotetramer has NADPH-dependent quinone reductase activity (in vitro), hence could play a role in protection against cytotoxicity of exogenous quinones. As a heterotetramer, it can also reduce 9,10-phenanthrenequinone, 1,4-benzoquinone and various other o-quinones and p-quinones (in vitro). The chain is 3-oxoacyl-[acyl-carrier-protein] reductase (Cbr4) from Mus musculus (Mouse).